The sequence spans 332 residues: MSRILDNEMMGDEELVERTLRPQYLREYIGQDKVKDQLQIFIEAAKMRDEALDHVLLFGPPGLGKTTMAFVIANELGVNLKQTSGPVIEKAGDLVAILNDLEPGDVLFIDEIHRLPMSVEEVLYSAMEDFYIDIMIGAGEGSRSVHLELPPFTLIGATTRAGMLSNPLRARFGITGHMEYYAHADLTEIVERTADIFEMEITHEAASELALRSRGTPRIANRLLKRVRDFAQIMGNGVIDDVITDKALTMLDVDHEGLDYVDQKILRTMIEMYSGGPVGLGTLSVNIAEERETVEDMYEPYLIQKGFIMRTRSGRVATAKAYEHLGYEYSEK.

The interval 1–181 (MSRILDNEMM…FGITGHMEYY (181 aa)) is large ATPase domain (RuvB-L). ATP contacts are provided by residues Leu20, Arg21, Gly62, Lys65, Thr66, Thr67, 128–130 (EDF), Arg171, Tyr181, and Arg218. Thr66 is a binding site for Mg(2+). The segment at 182 to 252 (AHADLTEIVE…ITDKALTMLD (71 aa)) is small ATPAse domain (RuvB-S). The head domain (RuvB-H) stretch occupies residues 255–332 (HEGLDYVDQK…EHLGYEYSEK (78 aa)). The DNA site is built by Arg291, Arg310, Arg312, and Arg315.

The protein belongs to the RuvB family. Homohexamer. Forms an RuvA(8)-RuvB(12)-Holliday junction (HJ) complex. HJ DNA is sandwiched between 2 RuvA tetramers; dsDNA enters through RuvA and exits via RuvB. An RuvB hexamer assembles on each DNA strand where it exits the tetramer. Each RuvB hexamer is contacted by two RuvA subunits (via domain III) on 2 adjacent RuvB subunits; this complex drives branch migration. In the full resolvosome a probable DNA-RuvA(4)-RuvB(12)-RuvC(2) complex forms which resolves the HJ.

It localises to the cytoplasm. The enzyme catalyses ATP + H2O = ADP + phosphate + H(+). Functionally, the RuvA-RuvB-RuvC complex processes Holliday junction (HJ) DNA during genetic recombination and DNA repair, while the RuvA-RuvB complex plays an important role in the rescue of blocked DNA replication forks via replication fork reversal (RFR). RuvA specifically binds to HJ cruciform DNA, conferring on it an open structure. The RuvB hexamer acts as an ATP-dependent pump, pulling dsDNA into and through the RuvAB complex. RuvB forms 2 homohexamers on either side of HJ DNA bound by 1 or 2 RuvA tetramers; 4 subunits per hexamer contact DNA at a time. Coordinated motions by a converter formed by DNA-disengaged RuvB subunits stimulates ATP hydrolysis and nucleotide exchange. Immobilization of the converter enables RuvB to convert the ATP-contained energy into a lever motion, pulling 2 nucleotides of DNA out of the RuvA tetramer per ATP hydrolyzed, thus driving DNA branch migration. The RuvB motors rotate together with the DNA substrate, which together with the progressing nucleotide cycle form the mechanistic basis for DNA recombination by continuous HJ branch migration. Branch migration allows RuvC to scan DNA until it finds its consensus sequence, where it cleaves and resolves cruciform DNA. In Streptococcus pneumoniae serotype 4 (strain ATCC BAA-334 / TIGR4), this protein is Holliday junction branch migration complex subunit RuvB.